The primary structure comprises 85 residues: Cell division topological specificity factor (85 aa).

Belongs to the MinE family.

In terms of biological role, prevents the cell division inhibition by proteins MinC and MinD at internal division sites while permitting inhibition at polar sites. This ensures cell division at the proper site by restricting the formation of a division septum at the midpoint of the long axis of the cell. The polypeptide is Cell division topological specificity factor (Xylella fastidiosa (strain M12)).